The chain runs to 73 residues: Large ribosomal subunit protein bL31 (73 aa).

The protein belongs to the bacterial ribosomal protein bL31 family. Type A subfamily. Part of the 50S ribosomal subunit.

Functionally, binds the 23S rRNA. The protein is Large ribosomal subunit protein bL31 of Rhizobium rhizogenes (strain K84 / ATCC BAA-868) (Agrobacterium radiobacter).